The chain runs to 246 residues: Probable transcriptional regulatory protein ESA_01378 (246 aa).

It belongs to the TACO1 family.

It localises to the cytoplasm. The sequence is that of Probable transcriptional regulatory protein ESA_01378 from Cronobacter sakazakii (strain ATCC BAA-894) (Enterobacter sakazakii).